The following is a 318-amino-acid chain: Glycine--tRNA ligase alpha subunit (318 aa).

The protein belongs to the class-II aminoacyl-tRNA synthetase family. As to quaternary structure, tetramer of two alpha and two beta subunits.

The protein resides in the cytoplasm. It catalyses the reaction tRNA(Gly) + glycine + ATP = glycyl-tRNA(Gly) + AMP + diphosphate. The protein is Glycine--tRNA ligase alpha subunit of Saccharophagus degradans (strain 2-40 / ATCC 43961 / DSM 17024).